A 92-amino-acid polypeptide reads, in one-letter code: MAHTKAGGSTRNGRDSRGQRLGIKLGDGQFCTAGSIIFRQRGTKIFPGVNAGRGNDDTIYALITGYVKFERRRNRVYASVYPTRVQNSTSAE.

Residues 1-22 (MAHTKAGGSTRNGRDSRGQRLG) form a disordered region.

It belongs to the bacterial ribosomal protein bL27 family.

The polypeptide is Large ribosomal subunit protein bL27 (Mycoplasmopsis agalactiae (strain NCTC 10123 / CIP 59.7 / PG2) (Mycoplasma agalactiae)).